Consider the following 141-residue polypeptide: MSVAKAKGAQKTVQKGIHNKVAKKVRTSTTFRRPKTLQLSRKPKYARKSVAHAPRLDEYKIIVNPINSESAMKKIEDDNTLVFHVHLKANKFTIKEAVRKLYSVEPVKINTLIRPNGTKKAFVKLSADADALDVANRIGFL.

Phosphoserine occurs at positions 68 and 70.

This sequence belongs to the universal ribosomal protein uL23 family. Component of the large ribosomal subunit (LSU). Mature yeast ribosomes consist of a small (40S) and a large (60S) subunit. The 40S small subunit contains 1 molecule of ribosomal RNA (18S rRNA) and at least 33 different proteins. The large 60S subunit contains 3 rRNA molecules (25S, 5.8S and 5S rRNA) and at least 46 different proteins. uL23 is associated with the polypeptide exit tunnel.

The protein resides in the cytoplasm. In terms of biological role, this protein binds to a specific region on the 26S rRNA. Component of the ribosome, a large ribonucleoprotein complex responsible for the synthesis of proteins in the cell. The small ribosomal subunit (SSU) binds messenger RNAs (mRNAs) and translates the encoded message by selecting cognate aminoacyl-transfer RNA (tRNA) molecules. The large subunit (LSU) contains the ribosomal catalytic site termed the peptidyl transferase center (PTC), which catalyzes the formation of peptide bonds, thereby polymerizing the amino acids delivered by tRNAs into a polypeptide chain. The nascent polypeptides leave the ribosome through a tunnel in the LSU and interact with protein factors that function in enzymatic processing, targeting, and the membrane insertion of nascent chains at the exit of the ribosomal tunnel. uL23 is a major component of the universal docking site for these factors at the polypeptide exit tunnel. In Schizosaccharomyces pombe (strain 972 / ATCC 24843) (Fission yeast), this protein is Large ribosomal subunit protein uL23A (rpl2501).